A 152-amino-acid polypeptide reads, in one-letter code: Transcriptional regulator MraZ (152 aa).

SpoVT-AbrB domains are found at residues 5 to 52 (ASAI…PLEA) and 81 to 124 (AHEC…DEAA).

Belongs to the MraZ family. Forms oligomers.

Its subcellular location is the cytoplasm. The protein resides in the nucleoid. This Shewanella loihica (strain ATCC BAA-1088 / PV-4) protein is Transcriptional regulator MraZ.